Consider the following 672-residue polypeptide: MGIKGLTKFIADAAPNAIKEIKIESLMGRIIAIDASMSLYQFIIAIRDSEQYGNLTNESGETTSHISGLMSRSIRLMENGLKPIYVFDGAPPELKGSELEKRGEKRQKAEELLKKAKEEGNLEEIKKQSGRTVRVTRKQNEEAKKLLTLMGIPIIEAPCEAESQCAFLTKYNLAHATATEDADALVFGTKILIRNLNANATSNQNKNKNNSKRGYILTEINLEQVLKGLNLTMDEFIDFCILCGCDYCDTIKGIGSKTAYNLIKEYNCIEKIIENIDQNKYQVPSNFRFQEARKSFINPNVLPKEDIKIDWNEPQIEELKHFLIKDYNFNELRVTNYINRLLKARKVTTQRRLDNFFTACTKKSTKLIVEETKKEQTLPARKGKKRPTAGDKNKQKAVKRKIEQANANGHHKMKEENKSVDNEKNEDGIKSVDNEKNEDGIKSVDDEKNLDDEKNLDDEKNKDDEKNKDDEKNKDDEKNKDDEKNKDDEKKSLDNFSSNLFDSDKESESGNIIKNEKQNMDDEKINDNLPSLFGDHSRIRHTENKDNISDINNNNNNNNSSSNNNNISNNHFNSVSSNSTFNSSTKLKSEDTLKSNSPLKEDSPNSYNNIKNNNHTININSQINNHKEPISNNNLNNINNSTEIKKKNTLFLLPFCPKDVTNVKKKKYTQRC.

Residues 1–106 (MGIKGLTKFI…SELEKRGEKR (106 aa)) form an N-domain region. Asp34 contacts Mg(2+). 2 residues coordinate DNA: Arg47 and Arg72. Residues Asp88, Glu160, Glu162, Asp181, and Asp183 each coordinate Mg(2+). The I-domain stretch occupies residues 124 to 266 (EIKKQSGRTV…KTAYNLIKEY (143 aa)). Glu160 is a binding site for DNA. DNA is bound by residues Gly244 and Asp246. Asp246 provides a ligand contact to Mg(2+). The interval 349–357 (TQRRLDNFF) is interaction with PCNA. The segment at 371–610 (ETKKEQTLPA…EDSPNSYNNI (240 aa)) is disordered. Basic and acidic residues-rich tracts occupy residues 413-493 (MKEE…KKSL), 502-526 (DSDK…EKIN), and 535-548 (DHSR…KDNI). Residues 549–584 (SDINNNNNNNNSSSNNNNISNNHFNSVSSNSTFNSS) are compositionally biased toward low complexity. Over residues 587-603 (LKSEDTLKSNSPLKEDS) the composition is skewed to basic and acidic residues.

It belongs to the XPG/RAD2 endonuclease family. FEN1 subfamily. In terms of assembly, interacts with PCNA1 and PCNA2. Three molecules of FEN1 bind to one PCNA trimer with each molecule binding to one PCNA monomer. PCNA stimulates the nuclease activity without altering cleavage specificity. Requires Mg(2+) as cofactor. Post-translationally, phosphorylated. Phosphorylation upon DNA damage induces relocalization to the nuclear plasma.

Its subcellular location is the nucleus. The protein resides in the nucleolus. It is found in the nucleoplasm. It localises to the mitochondrion. Structure-specific nuclease with 5'-flap endonuclease and 5'-3' exonuclease activities involved in DNA replication and repair. During DNA replication, cleaves the 5'-overhanging flap structure that is generated by displacement synthesis when DNA polymerase encounters the 5'-end of a downstream Okazaki fragment. It enters the flap from the 5'-end and then tracks to cleave the flap base, leaving a nick for ligation. Also involved in the long patch base excision repair (LP-BER) pathway, by cleaving within the apurinic/apyrimidinic (AP) site-terminated flap. Acts as a genome stabilization factor that prevents flaps from equilibrating into structures that lead to duplications and deletions. Also possesses 5'-3' exonuclease activity on nicked or gapped double-stranded DNA, and exhibits RNase H activity. Also involved in replication and repair of rDNA and in repairing mitochondrial DNA. The sequence is that of Flap endonuclease 1 from Plasmodium falciparum (isolate 3D7).